The sequence spans 415 residues: Leucine-rich repeat-containing protein 34 (415 aa).

LRR repeat units lie at residues Ser246–Asn272 and Thr274–Thr296.

In terms of assembly, interacts with NPM1 and NCL. In terms of tissue distribution, expressed in testis where it specifically localizes to germ cells (at protein level). Not detected in other tissues tested (at protein level). Expressed in pluripotent embryonic stem cells and multipotent adult germline stem cells.

Its subcellular location is the nucleus. The protein localises to the nucleolus. It is found in the cytoplasm. Its function is as follows. Highly expressed in stem cells where it may be involved in regulation of pluripotency. In embryonic stem cells (ESCs), important for normal expression of the pluripotency regulators POU5F1/OCT4 and KLF4. Also important for expression of the ectodermal marker gene NES and the endodermal marker gene GATA4. Promotes stem cell proliferation in vitro. The protein is Leucine-rich repeat-containing protein 34 of Mus musculus (Mouse).